A 133-amino-acid polypeptide reads, in one-letter code: Basic phospholipase A2 beta-bungarotoxin A-AL2 chain (133 aa).

The first 5 residues, Phe-1–Ala-5, serve as a signal peptide directing secretion. The propeptide occupies Ala-6–Leu-13. 6 disulfides stabilise this stretch: Cys-40/Cys-132, Cys-42/Cys-58, Cys-57/Cys-113, Cys-64/Cys-106, Cys-74/Cys-99, and Cys-92/Cys-104. 3 residues coordinate Ca(2+): Tyr-41, Gly-43, and Gly-45. His-61 is a catalytic residue. A Ca(2+)-binding site is contributed by Asp-62. Residue Asp-107 is part of the active site.

Belongs to the phospholipase A2 family. Group I subfamily. D49 sub-subfamily. Heterodimer; disulfide-linked. The A chains have phospholipase A2 activity and the B chains show homology with the basic protease inhibitors. Ca(2+) is required as a cofactor. In terms of tissue distribution, expressed by the venom gland.

Its subcellular location is the secreted. The catalysed reaction is a 1,2-diacyl-sn-glycero-3-phosphocholine + H2O = a 1-acyl-sn-glycero-3-phosphocholine + a fatty acid + H(+). Its function is as follows. Snake venom phospholipase A2 (PLA2) that inhibits neuromuscular transmission by blocking acetylcholine release from the nerve termini. PLA2 catalyzes the calcium-dependent hydrolysis of the 2-acyl groups in 3-sn-phosphoglycerides. This Bungarus multicinctus (Many-banded krait) protein is Basic phospholipase A2 beta-bungarotoxin A-AL2 chain.